A 70-amino-acid polypeptide reads, in one-letter code: DNA-directed RNA polymerase subunit omega (70 aa).

This sequence belongs to the RNA polymerase subunit omega family. As to quaternary structure, the RNAP catalytic core consists of 2 alpha, 1 beta, 1 beta' and 1 omega subunit. When a sigma factor is associated with the core the holoenzyme is formed, which can initiate transcription.

The catalysed reaction is RNA(n) + a ribonucleoside 5'-triphosphate = RNA(n+1) + diphosphate. Functionally, promotes RNA polymerase assembly. Latches the N- and C-terminal regions of the beta' subunit thereby facilitating its interaction with the beta and alpha subunits. In Nitratiruptor sp. (strain SB155-2), this protein is DNA-directed RNA polymerase subunit omega.